The primary structure comprises 421 residues: Probable cysteine desulfurase (421 aa).

An N6-(pyridoxal phosphate)lysine modification is found at Lys-242.

This sequence belongs to the class-V pyridoxal-phosphate-dependent aminotransferase family. Csd subfamily. It depends on pyridoxal 5'-phosphate as a cofactor.

The enzyme catalyses (sulfur carrier)-H + L-cysteine = (sulfur carrier)-SH + L-alanine. Catalyzes the removal of elemental sulfur and selenium atoms from L-cysteine, L-cystine, L-selenocysteine, and L-selenocystine to produce L-alanine. This is Probable cysteine desulfurase (csd) from Pasteurella multocida (strain Pm70).